A 116-amino-acid polypeptide reads, in one-letter code: Large ribosomal subunit protein bL19 (116 aa).

This sequence belongs to the bacterial ribosomal protein bL19 family.

Its function is as follows. This protein is located at the 30S-50S ribosomal subunit interface and may play a role in the structure and function of the aminoacyl-tRNA binding site. This Pseudomonas putida (strain W619) protein is Large ribosomal subunit protein bL19.